Reading from the N-terminus, the 406-residue chain is 4-hydroxy-3-methylbut-2-en-1-yl diphosphate synthase (flavodoxin) (406 aa).

Cys297, Cys300, Cys343, and Glu350 together coordinate [4Fe-4S] cluster.

This sequence belongs to the IspG family. In terms of assembly, homodimer. It depends on [4Fe-4S] cluster as a cofactor.

It catalyses the reaction (2E)-4-hydroxy-3-methylbut-2-enyl diphosphate + oxidized [flavodoxin] + H2O + 2 H(+) = 2-C-methyl-D-erythritol 2,4-cyclic diphosphate + reduced [flavodoxin]. The protein operates within isoprenoid biosynthesis; isopentenyl diphosphate biosynthesis via DXP pathway; isopentenyl diphosphate from 1-deoxy-D-xylulose 5-phosphate: step 5/6. Converts 2C-methyl-D-erythritol 2,4-cyclodiphosphate (ME-2,4cPP) into 1-hydroxy-2-methyl-2-(E)-butenyl 4-diphosphate. This chain is 4-hydroxy-3-methylbut-2-en-1-yl diphosphate synthase (flavodoxin), found in Thermus thermophilus (strain ATCC BAA-163 / DSM 7039 / HB27).